A 991-amino-acid chain; its full sequence is KAT8 regulatory NSL complex subunit 1-like protein (991 aa).

Residue lysine 136 forms a Glycyl lysine isopeptide (Lys-Gly) (interchain with G-Cter in SUMO2) linkage. The disordered stretch occupies residues 443-462; that stretch reads VNSQVPQRSEEPLPEHDFEM. Over residues 450–461 the composition is skewed to basic and acidic residues; that stretch reads RSEEPLPEHDFE. Serine 463 is subject to Phosphoserine. The segment covering 749–763 has biased composition (polar residues); the sequence is ANVTSRTQNPSSQNT. Residues 749–770 are disordered; it reads ANVTSRTQNPSSQNTSRRRLRS. The region spanning 798 to 919 is the PEHE domain; that stretch reads EILTPRWRKV…DGQEDKSLRW (122 aa). Lysine 863 bears the N6-acetyllysine mark.

Acetylated on lysine residues by KAT8 upon ionizing radiation-induced DNA damage; deacetylated by HDAC3.

The chain is KAT8 regulatory NSL complex subunit 1-like protein (Kansl1l) from Mus musculus (Mouse).